We begin with the raw amino-acid sequence, 392 residues long: D-amino-acid oxidase 2 (392 aa).

8 residues coordinate FAD: Ser10, Ile13, Arg33, Asp34, Ala45, Ser46, Gly50, and Asn52. Phe56, Tyr245, Tyr262, and Arg311 together coordinate anthranilate. (R)-lactate contacts are provided by Tyr245, Tyr262, and Arg311. The FAD site is built by Arg311, Gly361, Ser362, Gly364, and Gln366. Residue Ser362 participates in anthranilate binding. Residue Ser362 coordinates (R)-lactate. A Microbody targeting signal motif is present at residues 390–392; the sequence is AKL.

It belongs to the DAMOX/DASOX family. FAD serves as cofactor.

It is found in the peroxisome matrix. It carries out the reaction a D-alpha-amino acid + O2 + H2O = a 2-oxocarboxylate + H2O2 + NH4(+). The catalysed reaction is D-methionine + O2 + H2O = 4-methylsulfanyl-2-oxobutanoate + H2O2 + NH4(+). The enzyme catalyses D-serine + O2 + H2O = 3-hydroxypyruvate + H2O2 + NH4(+). It catalyses the reaction D-histidine + O2 + H2O = 3-(imidazol-5-yl)pyruvate + H2O2 + NH4(+). It carries out the reaction D-proline + O2 = 1-pyrroline-2-carboxylate + H2O2. The catalysed reaction is D-alanine + O2 + H2O = pyruvate + H2O2 + NH4(+). The enzyme catalyses D-leucine + O2 + H2O = 4-methyl-2-oxopentanoate + H2O2 + NH4(+). It catalyses the reaction D-valine + O2 + H2O = 3-methyl-2-oxobutanoate + H2O2 + NH4(+). Catalyzes the oxidative deamination of D-amino acids with broad substrate specificity. Enables the organism to utilize D-amino acids as a source of nutrients. Enables the organism to utilize D-alanine, D-cysteine, D-histidine, D-leucine, D-methionine, D-phenylalanine, D-proline, D-serine, D-threonine, D-aspartate and D-valine as a nitrogen source and may also contribute to utlization of D-tryptophan, D-tyrosine and D-asparagine as a nitrogen source. Protects the organism from the toxicity of D-amino acids, including from D-alanine. May play a role in its interaction with the host. The chain is D-amino-acid oxidase 2 from Cryptococcus deuterogattii (strain R265) (Cryptococcus gattii VGII (strain R265)).